Consider the following 252-residue polypeptide: Small ribosomal subunit protein eS1B (252 aa).

Ala-2 is subject to N-acetylalanine; partial. Phosphoserine is present on Ser-251.

It belongs to the eukaryotic ribosomal protein eS1 family. In terms of assembly, component of the small ribosomal subunit (SSU). Mature yeast ribosomes consist of a small (40S) and a large (60S) subunit. The 40S small subunit contains 1 molecule of ribosomal RNA (18S rRNA) and at least 33 different proteins. The large 60S subunit contains 3 rRNA molecules (25S, 5.8S and 5S rRNA) and at least 46 different proteins. eS1 interacts directly with uS11 and eS26, which form part of the mRNA exit tunnel.

The protein localises to the cytoplasm. Functionally, component of the ribosome, a large ribonucleoprotein complex responsible for the synthesis of proteins in the cell. The small ribosomal subunit (SSU) binds messenger RNAs (mRNAs) and translates the encoded message by selecting cognate aminoacyl-transfer RNA (tRNA) molecules. The large subunit (LSU) contains the ribosomal catalytic site termed the peptidyl transferase center (PTC), which catalyzes the formation of peptide bonds, thereby polymerizing the amino acids delivered by tRNAs into a polypeptide chain. The nascent polypeptides leave the ribosome through a tunnel in the LSU and interact with protein factors that function in enzymatic processing, targeting, and the membrane insertion of nascent chains at the exit of the ribosomal tunnel. The chain is Small ribosomal subunit protein eS1B (rps102) from Schizosaccharomyces pombe (strain 972 / ATCC 24843) (Fission yeast).